A 304-amino-acid chain; its full sequence is Cell surface-binding protein OPG105 (304 aa).

Residues 1–235 form the Alpha-carbonic anhydrase domain; that stretch reads MPQQLSPINI…NDDTQVYYSG (235 aa). Residues 1-275 are Virion surface-facing; that stretch reads MPQQLSPINI…YQKYIEENKT (275 aa). Residues 276–294 form a helical membrane-spanning segment; the sequence is FAIIAIVFVFILTAILFFM. Residues 295–304 are Intravirion-facing; the sequence is SRRYSREKQN.

It belongs to the alpha-carbonic anhydrase family. As to quaternary structure, homodimer; disulfide-linked. Apparently non-glycosylated.

The protein localises to the virion membrane. In terms of biological role, binds to chondroitin sulfate on the cell surface to provide virion attachment to target cell. The chain is Cell surface-binding protein OPG105 (OPG105) from Bos taurus (Bovine).